A 363-amino-acid polypeptide reads, in one-letter code: Carbamoyl phosphate synthase small chain (363 aa).

The interval 1–173 is CPSase; that stretch reads MMKAFLVLDN…SKYIFGTHTG (173 aa). Residues S46, G225, and G227 each contribute to the L-glutamine site. The region spanning 177–363 is the Glutamine amidotransferase type-1 domain; it reads KLAVYDYGVK…YDLVEKTKKG (187 aa). Residue C253 is the Nucleophile of the active site. Residues L254, Q257, N295, G297, and F298 each coordinate L-glutamine. Active-site residues include H336 and E338.

Belongs to the CarA family. In terms of assembly, composed of two chains; the small (or glutamine) chain promotes the hydrolysis of glutamine to ammonia, which is used by the large (or ammonia) chain to synthesize carbamoyl phosphate. Tetramer of heterodimers (alpha,beta)4.

It catalyses the reaction hydrogencarbonate + L-glutamine + 2 ATP + H2O = carbamoyl phosphate + L-glutamate + 2 ADP + phosphate + 2 H(+). It carries out the reaction L-glutamine + H2O = L-glutamate + NH4(+). Its pathway is amino-acid biosynthesis; L-arginine biosynthesis; carbamoyl phosphate from bicarbonate: step 1/1. The protein operates within pyrimidine metabolism; UMP biosynthesis via de novo pathway; (S)-dihydroorotate from bicarbonate: step 1/3. Its function is as follows. Small subunit of the glutamine-dependent carbamoyl phosphate synthetase (CPSase). CPSase catalyzes the formation of carbamoyl phosphate from the ammonia moiety of glutamine, carbonate, and phosphate donated by ATP, constituting the first step of 2 biosynthetic pathways, one leading to arginine and/or urea and the other to pyrimidine nucleotides. The small subunit (glutamine amidotransferase) binds and cleaves glutamine to supply the large subunit with the substrate ammonia. The chain is Carbamoyl phosphate synthase small chain from Leptospira interrogans serogroup Icterohaemorrhagiae serovar copenhageni (strain Fiocruz L1-130).